The primary structure comprises 138 residues: Basic phospholipase A2 homolog CTs-K49a (138 aa).

The first 16 residues, 1-16 (MRTLWIMAVLLVVVEG), serve as a signal peptide directing secretion. Cystine bridges form between Cys-42-Cys-131, Cys-44-Cys-60, Cys-59-Cys-111, Cys-65-Cys-138, Cys-66-Cys-104, and Cys-91-Cys-102. An important for membrane-damaging activities in eukaryotes and bacteria; heparin-binding region spans residues 121-133 (KKKKINLKLFCKK).

The protein belongs to the phospholipase A2 family. Group II subfamily. K49 sub-subfamily. As to expression, expressed by the venom gland.

It is found in the secreted. Snake venom phospholipase A2 homolog that lacks catalytic activity. It shows myotoxic and weak anticoagulant activities. A model of myotoxic mechanism has been proposed: an apo Lys49-PLA2 is activated by the entrance of a hydrophobic molecule (e.g. fatty acid) at the hydrophobic channel of the protein leading to a reorientation of a monomer. This reorientation causes a transition between 'inactive' to 'active' states, causing alignment of C-terminal and membrane-docking sites (MDoS) side-by-side and putting the membrane-disruption sites (MDiS) in the same plane, exposed to solvent and in a symmetric position for both monomers. The MDoS region stabilizes the toxin on membrane by the interaction of charged residues with phospholipid head groups. Subsequently, the MDiS region destabilizes the membrane with penetration of hydrophobic residues. This insertion causes a disorganization of the membrane, allowing an uncontrolled influx of ions (i.e. calcium and sodium), and eventually triggering irreversible intracellular alterations and cell death. This Trimeresurus stejnegeri (Chinese green tree viper) protein is Basic phospholipase A2 homolog CTs-K49a.